A 2457-amino-acid polypeptide reads, in one-letter code: Highly reducing polyketide synthase ACTTS3 (2457 aa).

The 431-residue stretch at 5 to 435 folds into the Ketosynthase family 3 (KS3) domain; that stretch reads REPIAVIGSA…GTNAHVILES (431 aa). Active-site for beta-ketoacyl synthase activity residues include Cys179, His316, and His356. A malonyl-CoA:ACP transacylase (MAT) domain region spans residues 545–856; that stretch reads RVLGIFTGQG…VMEAVLESSP (312 aa). The For malonyltransferase activity role is filled by Ser641. Positions 938 to 1078 are N-terminal hotdog fold; it reads HELLGRRTAD…GRIIIHLGSG (141 aa). A dehydratase (DH) domain region spans residues 938–1244; it reads HELLGRRTAD…LSLKSVAEPT (307 aa). The PKS/mFAS DH domain occupies 938–1246; the sequence is HELLGRRTAD…LKSVAEPTEE (309 aa). His970 functions as the Proton acceptor; for dehydratase activity in the catalytic mechanism. The interval 1091–1246 is C-terminal hotdog fold; the sequence is TDLSPVDLDR…LKSVAEPTEE (156 aa). Asp1152 functions as the Proton donor; for dehydratase activity in the catalytic mechanism. The interval 1399–1587 is methyltransferase (CMet) domain; it reads ETMNNCIARA…DVFYDFPDRS (189 aa). The tract at residues 2085 to 2281 is ketoreductase (KR) domain; sequence FLPDKTYLMI…SDRHIENHLR (197 aa). Residues 2374-2451 enclose the Carrier domain; it reads DVTTVFQQAF…EISIDATKKY (78 aa). Ser2411 is modified (O-(pantetheine 4'-phosphoryl)serine).

It depends on pantetheine 4'-phosphate as a cofactor.

It functions in the pathway mycotoxin biosynthesis. Functionally, highly reducing polyketide synthase; part of the gene clusters that mediate the biosynthesis of the host-selective toxins (HSTs) ACT-toxins responsible for brown spot of tangerine disease by the tangerine pathotype which affects tangerines and mandarins. ACT-toxins consist of three moieties, 9,10-epoxy-8-hydroxy-9-methyl-decatrienoic acid (EDA), valine and a polyketide. ACT-toxin I is toxic to both citrus and pear; toxin II the 5''-deoxy derivative of ACT-toxin I, is highly toxic to pear and slightly toxic to citrus. On cellular level, ACT-toxins affect plasma membrane of susceptible cells and cause a sudden increase in loss of K(+) after a few minutes of toxin treatment. The acyl-CoA ligase ACTT1, the hydrolase ACTT2, the enoyl-CoA hydratases ACTT3 and ACTT6, and the acyl-CoA synthetase ACTT5 are all involved in the biosynthesis of the AK-, AF- and ACT-toxin common 9,10-epoxy-8-hydroxy-9-methyl-decatrienoic acid (EDA) structural moiety. The exact role of each enzyme, and of additional enzymes identified within the AF-toxin clusters have still to be determined. On the other hand, ACTTS1 to ACTTS4 are specific to the tangerine pathotype. The function of ACTTS3 is to elongate the polyketide chain portion of ACT-toxin that is unique to this toxin. The enoyl-reductase ACTTS2 might complement the missing enoyl-reductase (ER) domain in ACTTS3 in the synthesis of the polyketide portion of ACT-toxin. The roles of the nonribosomal peptide synthetases-related proteins ACTTS1 and ACTTS4 have also still not been elucidated. The chain is Highly reducing polyketide synthase ACTTS3 from Alternaria alternata (Alternaria rot fungus).